The sequence spans 103 residues: UPF0145 protein PTH_2690 (103 aa).

The protein belongs to the UPF0145 family.

The chain is UPF0145 protein PTH_2690 from Pelotomaculum thermopropionicum (strain DSM 13744 / JCM 10971 / SI).